Reading from the N-terminus, the 504-residue chain is MSLIEGLLQTSSTVTLLGTVLFLLVPYLRSSGSSSEEQGKEPPGPRPLPLLGNMLQLDLKKPYCTLCELSKKYGSIFTVHFGSKKVVVLAGYKTVKQALVNQAEDFGERDITPAFYDFNQGHGILFTNGDSWKEMRRFALTNLRDFGMGKKGSEEKILEEIPYLIEVLEKHEGKAFDTTQSVHHAVSNIISAIVYGSRFEYTDPLFTGMVDRVNENVHLIGSASIQMYNMFPWLGPWINNLTRLKKNVADLKMEVIELVRGLKETLNPHMCRGFVDSFLVRKQTLEESGKMDSFYHDDNLLFSIGNLFGAGTDTTGTTLRWGLLLMAKYPHIQDQVQEEISRVIGSRQTLVEDRKNLPYTDAVIHETQRLANISPMAVPHTTSRDVTFQGYFIKKGTSVIPLLMSVLQDDNEWESPNTFNPSHFLDEQGGFVKRDAFMAFSAGRRVCLGEGLARMELFLFFTSLLQRFRFSPPPGVTEDDLDLTPLLGFTLHPSPHQLCAVSRV.

Residue C447 coordinates heme.

It belongs to the cytochrome P450 family. The cofactor is heme.

It localises to the endoplasmic reticulum membrane. The protein resides in the microsome membrane. It carries out the reaction an organic molecule + reduced [NADPH--hemoprotein reductase] + O2 = an alcohol + oxidized [NADPH--hemoprotein reductase] + H2O + H(+). This chain is Cytochrome P450 2K4 (cyp2k4), found in Oncorhynchus mykiss (Rainbow trout).